The primary structure comprises 291 residues: Phosphate import ATP-binding protein PstB (291 aa).

Residues 45 to 286 enclose the ABC transporter domain; it reads YSTQNLDLWY…PADKQTEDYI (242 aa). 77 to 84 contributes to the ATP binding site; sequence GPSGCGKS.

This sequence belongs to the ABC transporter superfamily. Phosphate importer (TC 3.A.1.7) family. In terms of assembly, the complex is composed of two ATP-binding proteins (PstB), two transmembrane proteins (PstC and PstA) and a solute-binding protein (PstS).

Its subcellular location is the cell membrane. The enzyme catalyses phosphate(out) + ATP + H2O = ADP + 2 phosphate(in) + H(+). In terms of biological role, part of the ABC transporter complex PstSACB involved in phosphate import. Responsible for energy coupling to the transport system. This chain is Phosphate import ATP-binding protein PstB, found in Staphylococcus epidermidis (strain ATCC 35984 / DSM 28319 / BCRC 17069 / CCUG 31568 / BM 3577 / RP62A).